The sequence spans 547 residues: Puff-specific protein Bx42 (547 aa).

The tract at residues 177 to 343 (AQYIRYTPSQ…AREERAGLRN (167 aa)) is SNW. Serine 227 and serine 235 each carry phosphoserine. Disordered regions lie at residues 333–398 (RARE…ERDI) and 486–547 (QFSG…SKRD). Composition is skewed to basic and acidic residues over residues 358–398 (EVRE…ERDI) and 526–539 (KRAE…SSHS).

Belongs to the SNW family.

The protein localises to the nucleus. Functionally, may play a role in chromatin structure and function. The chain is Puff-specific protein Bx42 (Bx42) from Drosophila melanogaster (Fruit fly).